Here is a 61-residue protein sequence, read N- to C-terminus: UPF0434 protein Pfl01_4174 (61 aa).

This sequence belongs to the UPF0434 family.

The chain is UPF0434 protein Pfl01_4174 from Pseudomonas fluorescens (strain Pf0-1).